The following is a 35-amino-acid chain: Coenzyme PQQ synthesis protein A (35 aa).

The pyrroloquinoline quinone (Glu-Tyr) cross-link spans 16 to 20 (EINMY).

Belongs to the PqqA family.

The protein operates within cofactor biosynthesis; pyrroloquinoline quinone biosynthesis. Required for coenzyme pyrroloquinoline quinone (PQQ) biosynthesis. PQQ is probably formed by cross-linking a specific glutamate to a specific tyrosine residue and excising these residues from the peptide. The sequence is that of Coenzyme PQQ synthesis protein A from Ruegeria pomeroyi (strain ATCC 700808 / DSM 15171 / DSS-3) (Silicibacter pomeroyi).